The chain runs to 222 residues: Beta-amylase (222 aa).

Residue threonine 36 coordinates substrate. Glutamate 74 functions as the Proton acceptor in the catalytic mechanism. Substrate-binding positions include asparagine 75 to alanine 76 and arginine 114.

This sequence belongs to the glycosyl hydrolase 14 family.

The enzyme catalyses Hydrolysis of (1-&gt;4)-alpha-D-glucosidic linkages in polysaccharides so as to remove successive maltose units from the non-reducing ends of the chains.. The sequence is that of Beta-amylase (BMY1) from Secale cereale (Rye).